The sequence spans 114 residues: TSCETHQICGRKIIYRDGTTNTQEIDYCRCSGDTDCPKDDVNEISFVDWSYWEVSYYTCLTQAGNYHYCNEGAAVQPGAGPIIYRQNNVEHPYKMNCRCNPCWINKARCCTPGT.

Post-translationally, contains 6 disulfide bonds. In terms of tissue distribution, expressed by the venom duct.

The protein resides in the secreted. In terms of biological role, acts as a neurotoxin by inhibiting an ion channel. This Iotyrris olangoensis (Sea snail) protein is Turripeptide OL22.